The chain runs to 400 residues: Acetate kinase (400 aa).

Asparagine 10 contacts Mg(2+). Lysine 17 provides a ligand contact to ATP. Arginine 91 contributes to the substrate binding site. Catalysis depends on aspartate 150, which acts as the Proton donor/acceptor. ATP is bound by residues 210–214, 285–287, and 333–337; these read HLGNG, DCR, and GIGEN. Glutamate 387 provides a ligand contact to Mg(2+).

This sequence belongs to the acetokinase family. As to quaternary structure, homodimer. Mg(2+) serves as cofactor. It depends on Mn(2+) as a cofactor.

Its subcellular location is the cytoplasm. It catalyses the reaction acetate + ATP = acetyl phosphate + ADP. The protein operates within metabolic intermediate biosynthesis; acetyl-CoA biosynthesis; acetyl-CoA from acetate: step 1/2. In terms of biological role, catalyzes the formation of acetyl phosphate from acetate and ATP. Can also catalyze the reverse reaction. The polypeptide is Acetate kinase (Pectobacterium atrosepticum (strain SCRI 1043 / ATCC BAA-672) (Erwinia carotovora subsp. atroseptica)).